Here is a 307-residue protein sequence, read N- to C-terminus: Putative oxidoreductase YceM (307 aa).

The protein belongs to the Gfo/Idh/MocA family.

This Salmonella typhimurium (strain LT2 / SGSC1412 / ATCC 700720) protein is Putative oxidoreductase YceM (yceM).